The primary structure comprises 106 residues: Iron-sulfur cluster assembly protein CyaY (106 aa).

It belongs to the frataxin family.

Functionally, involved in iron-sulfur (Fe-S) cluster assembly. May act as a regulator of Fe-S biogenesis. The chain is Iron-sulfur cluster assembly protein CyaY from Salmonella heidelberg (strain SL476).